The primary structure comprises 40 residues: Large ribosomal subunit protein bL36 (40 aa).

Belongs to the bacterial ribosomal protein bL36 family.

The polypeptide is Large ribosomal subunit protein bL36 (Corynebacterium aurimucosum (strain ATCC 700975 / DSM 44827 / CIP 107346 / CN-1) (Corynebacterium nigricans)).